Consider the following 190-residue polypeptide: Holliday junction branch migration complex subunit RuvA (190 aa).

The domain I stretch occupies residues 1–64; that stretch reads MIGSLTGIIE…DNLTQLYGFL (64 aa). A domain II region spans residues 65–142; it reads DKQEQDYMRM…KMPIEETLII (78 aa). Lys143 is a region of interest (flexible linker). The segment at 143–190 is domain III; it reads KEDDSLAALISLGYDKLKAFNAIQEIKANFPDDSIQEIIRKALQKLSQ.

It belongs to the RuvA family. Homotetramer. Forms an RuvA(8)-RuvB(12)-Holliday junction (HJ) complex. HJ DNA is sandwiched between 2 RuvA tetramers; dsDNA enters through RuvA and exits via RuvB. An RuvB hexamer assembles on each DNA strand where it exits the tetramer. Each RuvB hexamer is contacted by two RuvA subunits (via domain III) on 2 adjacent RuvB subunits; this complex drives branch migration. In the full resolvosome a probable DNA-RuvA(4)-RuvB(12)-RuvC(2) complex forms which resolves the HJ.

The protein resides in the cytoplasm. Functionally, the RuvA-RuvB-RuvC complex processes Holliday junction (HJ) DNA during genetic recombination and DNA repair, while the RuvA-RuvB complex plays an important role in the rescue of blocked DNA replication forks via replication fork reversal (RFR). RuvA specifically binds to HJ cruciform DNA, conferring on it an open structure. The RuvB hexamer acts as an ATP-dependent pump, pulling dsDNA into and through the RuvAB complex. HJ branch migration allows RuvC to scan DNA until it finds its consensus sequence, where it cleaves and resolves the cruciform DNA. This is Holliday junction branch migration complex subunit RuvA from Ehrlichia chaffeensis (strain ATCC CRL-10679 / Arkansas).